The primary structure comprises 232 residues: 5'-methylthioadenosine/S-adenosylhomocysteine nucleosidase (232 aa).

E12 functions as the Proton acceptor in the catalytic mechanism. Substrate contacts are provided by residues G78, M153, and 174–175 (ME). Catalysis depends on D198, which acts as the Proton donor.

It belongs to the PNP/UDP phosphorylase family. MtnN subfamily.

It catalyses the reaction S-adenosyl-L-homocysteine + H2O = S-(5-deoxy-D-ribos-5-yl)-L-homocysteine + adenine. The enzyme catalyses S-methyl-5'-thioadenosine + H2O = 5-(methylsulfanyl)-D-ribose + adenine. The catalysed reaction is 5'-deoxyadenosine + H2O = 5-deoxy-D-ribose + adenine. It functions in the pathway amino-acid biosynthesis; L-methionine biosynthesis via salvage pathway; S-methyl-5-thio-alpha-D-ribose 1-phosphate from S-methyl-5'-thioadenosine (hydrolase route): step 1/2. Functionally, catalyzes the irreversible cleavage of the glycosidic bond in both 5'-methylthioadenosine (MTA) and S-adenosylhomocysteine (SAH/AdoHcy) to adenine and the corresponding thioribose, 5'-methylthioribose and S-ribosylhomocysteine, respectively. Also cleaves 5'-deoxyadenosine, a toxic by-product of radical S-adenosylmethionine (SAM) enzymes, into 5-deoxyribose and adenine. The polypeptide is 5'-methylthioadenosine/S-adenosylhomocysteine nucleosidase (Geobacillus sp. (strain WCH70)).